The sequence spans 376 residues: Thymidine kinase (376 aa).

The interval Met-1–Glu-39 is disordered. Over residues Ser-19–Arg-32 the composition is skewed to basic residues. Gly-56–Thr-63 contacts ATP. Glu-83 acts as the Proton acceptor in catalysis. Substrate contacts are provided by Tyr-101 and Gln-125. Arg-216 contacts ATP. Position 222 (Arg-222) interacts with substrate. A disordered region spans residues Gly-260 to Pro-280.

The protein belongs to the herpesviridae thymidine kinase family. In terms of assembly, homodimer.

It catalyses the reaction thymidine + ATP = dTMP + ADP + H(+). Its function is as follows. Catalyzes the transfer of the gamma-phospho group of ATP to thymidine to generate dTMP in the salvage pathway of pyrimidine synthesis. The dTMP serves as a substrate for DNA polymerase during viral DNA replication. Allows the virus to be reactivated and to grow in non-proliferative cells lacking a high concentration of phosphorylated nucleic acid precursors. The protein is Thymidine kinase of Homo sapiens (Human).